Reading from the N-terminus, the 258-residue chain is Snake venom serine protease HS114 (258 aa).

The first 18 residues, 1 to 18 (MVLVRVVANLLILQLSYA), serve as a signal peptide directing secretion. The propeptide occupies 19 to 24 (QKVSEL). Residues 25–249 (VVGGDECNIN…YNTWIESVIA (225 aa)) form the Peptidase S1 domain. 6 cysteine pairs are disulfide-bonded: cysteine 31–cysteine 163, cysteine 50–cysteine 66, cysteine 98–cysteine 256, cysteine 142–cysteine 210, cysteine 174–cysteine 189, and cysteine 200–cysteine 225. Asparagine 44 carries N-linked (GlcNAc...) asparagine glycosylation. Catalysis depends on charge relay system residues histidine 65 and aspartate 110. Serine 204 acts as the Charge relay system in catalysis.

It belongs to the peptidase S1 family. Snake venom subfamily. In terms of assembly, monomer. Post-translationally, N-glycosylated. Contains approximately 10% carbohydrates. Expressed by the venom gland.

It localises to the secreted. Inhibited by benzamidine, PMSF, leupeptin, SDS and DTT, but not by EDTA, and commercial antivenom. Snake venom serine protease that shows non-specific action on fibrinogen. It preferentially degrades fibrinogen Aalpha (FGA), releasing fibrinopeptide A, and shows a lower activity on fibrinogen Bbeta (FGB), releasing fibrinopeptide B and other uncommon fibrinopeptides. Also shows low fibrinolytic activity compared to plasmin. Has high enzymatic activity on the substrates for activated protein C and factor XIa, and for thrombin. Shows a wide activity spectrum at different peptide sequences, with a preferential cleavage at Lys-|-Xaa over Arg-|-Xaa bonds. The polypeptide is Snake venom serine protease HS114 (Bothrops jararaca (Jararaca)).